The following is a 177-amino-acid chain: MSRIGKKPISVPSGVTATVEGQLVKAKGPKGELSYLVNDEVLVKLEESFISVSPRDQSKDARSKWGMSRSMIENIFCGVKDGFEKRLEINGVGYRAALQGKDIQLSLGFSHDVIYKVPSGVTVSIPKPTEIVVSGIDKQQVGQVAAEIREYRRPEPYKGKGIKHADERIFRKEGKKK.

It belongs to the universal ribosomal protein uL6 family. As to quaternary structure, part of the 50S ribosomal subunit.

Functionally, this protein binds to the 23S rRNA, and is important in its secondary structure. It is located near the subunit interface in the base of the L7/L12 stalk, and near the tRNA binding site of the peptidyltransferase center. This chain is Large ribosomal subunit protein uL6, found in Bartonella henselae (strain ATCC 49882 / DSM 28221 / CCUG 30454 / Houston 1) (Rochalimaea henselae).